The following is a 436-amino-acid chain: Trigger factor (436 aa).

The 86-residue stretch at 163-248 (TDRVIIDFAG…VKNVAEAILP (86 aa)) folds into the PPIase FKBP-type domain.

The protein belongs to the FKBP-type PPIase family. Tig subfamily.

Its subcellular location is the cytoplasm. The enzyme catalyses [protein]-peptidylproline (omega=180) = [protein]-peptidylproline (omega=0). Its function is as follows. Involved in protein export. Acts as a chaperone by maintaining the newly synthesized protein in an open conformation. Functions as a peptidyl-prolyl cis-trans isomerase. The protein is Trigger factor of Laribacter hongkongensis (strain HLHK9).